The primary structure comprises 185 residues: Prenylated Rab acceptor protein 1 (185 aa).

Topologically, residues 1–78 (MAAEKDQQKD…RNVEYYQSNY (78 aa)) are cytoplasmic. The interval 30-54 (AGRERLERRRATIRPWSSFVDQRRF) is required for interaction with prenylated RAB3A and VAMP2. Transmembrane regions (helical) follow at residues 79-94 (VFVF…VTSP) and 95-112 (MLLV…ILYL). The Cytoplasmic portion of the chain corresponds to 113–131 (RTLQSKFVLFGREVSPAHQ). Transmembrane regions (helical) follow at residues 132–148 (YALA…LAGA) and 149–165 (GSAV…VIGS). The tract at residues 165 to 185 (SHAAFHQMEAVDGEELQMEPV) is required for interaction with GDI1. The Cytoplasmic segment spans residues 166 to 185 (HAAFHQMEAVDGEELQMEPV). The segment at 175 to 185 (VDGEELQMEPV) is required for interaction with prenylated RAB3A and VAMP2. The homodimerization stretch occupies residues 175 to 185 (VDGEELQMEPV).

Belongs to the PRA1 family. As to quaternary structure, homodimer. Interacts with VAMP2 (synaptobrevin-2), prenylated Rab proteins, GDI1, NDRG1 and PCLO.

The protein resides in the cell membrane. Its subcellular location is the cytoplasm. It is found in the golgi apparatus. It localises to the cytoplasmic vesicle. The protein localises to the secretory vesicle. The protein resides in the synaptic vesicle. Functionally, general Rab protein regulator required for vesicle formation from the Golgi complex. May control vesicle docking and fusion by mediating the action of Rab GTPases to the SNARE complexes. In addition it inhibits the removal of Rab GTPases from the membrane by GDI1. This is Prenylated Rab acceptor protein 1 (RABAC1) from Canis lupus familiaris (Dog).